Here is a 963-residue protein sequence, read N- to C-terminus: Longitudinals lacking protein, isoforms J/P/Q/S/Z (963 aa).

In terms of domain architecture, BTB spans 32 to 97 (VDCTLAAEGK…MYRGEVNISQ (66 aa)). Disordered regions lie at residues 115 to 200 (LSDN…SSVL), 228 to 340 (SSGP…ASAS), 447 to 469 (DAQQRDPQDEAGQNEGGESRIRV), and 482 to 520 (GKSSDEPSDKLTQSKKSLISDAKTTNKTSTPIRPKVSTT). Low complexity-rich tracts occupy residues 162 to 175 (SGDVSGSREGSSSP), 228 to 251 (SSGPAAGTSSQASSTQQQQPLTST), 263 to 293 (TSSTAAPASGASASAAVQQAHLHQQQAQTTS), and 329 to 340 (NSATGPNPASAS). Polar residues predominate over residues 491–512 (KLTQSKKSLISDAKTTNKTSTP). The C2H2-type 1; degenerate zinc finger occupies 849-871 (WVCRNCNRTYKWKNSLKCHLKNE). A C2H2-type 2; degenerate zinc finger spans residues 878 to 901 (YFCSKMCGYATNVHSNLKRHLNTK). Residues 900–963 (TKCRDREKDA…YTLVFQNDSA (64 aa)) form a disordered region. Positions 901–915 (KCRDREKDADDEKKP) are enriched in basic and acidic residues. Residues 937–953 (SSSNNNNNGGGSSTSST) show a composition bias toward low complexity. Over residues 954-963 (YTLVFQNDSA) the composition is skewed to polar residues.

In terms of tissue distribution, by stage 11, isoform Q, isoform P and isoform Z are expressed throughout the mesoderm. From stage 15, expression of isoform P expands to all tissues, whereas expression of isoform Z and isoform Q becomes restricted during later stages; starting from stage 14 to 16, isoform Z is expressed in muscle, and isoform Q and isoform Z are expressed in the CNS. For some isoforms, expression is also seen in specific types of cells in the embryo; isoform Z is expressed in the ventral furrow at stage 5, and isoform Q is expressed around the tracheal pits at stage 11. Isoform Z also shows transient enrichment in a dorsal cell layer in the CNS at stages 13 and 14.

The protein resides in the nucleus. In terms of biological role, putative transcription factor required for axon growth and guidance in the central and peripheral nervous systems. Repels CNS axons away from the midline by promoting the expression of the midline repellent sli and its receptor robo. The polypeptide is Longitudinals lacking protein, isoforms J/P/Q/S/Z (Drosophila melanogaster (Fruit fly)).